A 62-amino-acid polypeptide reads, in one-letter code: Photosystem II reaction center protein Z (62 aa).

A run of 2 helical transmembrane segments spans residues 8 to 28 (AVFALIATSSILLIGVPVVFA) and 41 to 61 (FSGTSLWIGLVFLVGILNSLI).

Belongs to the PsbZ family. PSII is composed of 1 copy each of membrane proteins PsbA, PsbB, PsbC, PsbD, PsbE, PsbF, PsbH, PsbI, PsbJ, PsbK, PsbL, PsbM, PsbT, PsbY, PsbZ, Psb30/Ycf12, at least 3 peripheral proteins of the oxygen-evolving complex and a large number of cofactors. It forms dimeric complexes.

The protein localises to the plastid. The protein resides in the chloroplast thylakoid membrane. Its function is as follows. May control the interaction of photosystem II (PSII) cores with the light-harvesting antenna, regulates electron flow through the 2 photosystem reaction centers. PSII is a light-driven water plastoquinone oxidoreductase, using light energy to abstract electrons from H(2)O, generating a proton gradient subsequently used for ATP formation. This Panax ginseng (Korean ginseng) protein is Photosystem II reaction center protein Z.